Consider the following 235-residue polypeptide: Ribonuclease PH (235 aa).

Phosphate contacts are provided by residues R86 and G124–R126.

The protein belongs to the RNase PH family. Homohexameric ring arranged as a trimer of dimers.

The catalysed reaction is tRNA(n+1) + phosphate = tRNA(n) + a ribonucleoside 5'-diphosphate. Functionally, phosphorolytic 3'-5' exoribonuclease that plays an important role in tRNA 3'-end maturation. Removes nucleotide residues following the 3'-CCA terminus of tRNAs; can also add nucleotides to the ends of RNA molecules by using nucleoside diphosphates as substrates, but this may not be physiologically important. Probably plays a role in initiation of 16S rRNA degradation (leading to ribosome degradation) during starvation. In Francisella tularensis subsp. tularensis (strain FSC 198), this protein is Ribonuclease PH.